The following is a 629-amino-acid chain: Pentatricopeptide repeat-containing protein At1g62930, chloroplastic (629 aa).

Residues 1 to 41 constitute a chloroplast transit peptide; that stretch reads MTSCVHLGIVASQSKKMSLAKRFAQLRKASPLFSLRGVYFS. 15 PPR repeats span residues 79–113, 114–148, 149–183, 184–218, 219–253, 254–288, 289–323, 324–358, 359–393, 394–428, 429–463, 464–498, 499–533, 534–568, and 569–603; these read SIVE…RISY, DLYS…GYEP, DIVT…EYQP, NTVT…GCQP, DLFT…KIEA, DVVI…GIRP, NVVT…KINP, NVVT…SIDP, DIFT…DCFP, NVVT…GLVG, NTVT…GVPP, DIIT…KMEP, DIYT…GVKP, NVII…GTLP, and NSGT…GFVG.

This sequence belongs to the PPR family. P subfamily.

Its subcellular location is the plastid. It localises to the chloroplast. The protein is Pentatricopeptide repeat-containing protein At1g62930, chloroplastic of Arabidopsis thaliana (Mouse-ear cress).